An 81-amino-acid polypeptide reads, in one-letter code: Bacteriochlorophyll c-binding protein (81 aa).

His25 is a binding site for a bacteriochlorophyll c.

The protein belongs to the BChl C/E-binding protein family.

Its subcellular location is the chlorosome. The protein resides in the chlorosome envelope. In terms of biological role, component of the photosynthetic apparatus. The light harvesting B740 complex binds bacteriochlorophyll c. The protein is Bacteriochlorophyll c-binding protein (csmA) of Prosthecochloris aestuarii (strain DSM 271 / SK 413).